The sequence spans 441 residues: Methylenetetrahydrofolate--tRNA-(uracil-5-)-methyltransferase TrmFO (441 aa).

An FAD-binding site is contributed by 11-16 (GAGLAG).

Belongs to the MnmG family. TrmFO subfamily. FAD is required as a cofactor.

The protein localises to the cytoplasm. The catalysed reaction is uridine(54) in tRNA + (6R)-5,10-methylene-5,6,7,8-tetrahydrofolate + NADH + H(+) = 5-methyluridine(54) in tRNA + (6S)-5,6,7,8-tetrahydrofolate + NAD(+). It catalyses the reaction uridine(54) in tRNA + (6R)-5,10-methylene-5,6,7,8-tetrahydrofolate + NADPH + H(+) = 5-methyluridine(54) in tRNA + (6S)-5,6,7,8-tetrahydrofolate + NADP(+). Functionally, catalyzes the folate-dependent formation of 5-methyl-uridine at position 54 (M-5-U54) in all tRNAs. This chain is Methylenetetrahydrofolate--tRNA-(uracil-5-)-methyltransferase TrmFO, found in Lactiplantibacillus plantarum (strain ATCC BAA-793 / NCIMB 8826 / WCFS1) (Lactobacillus plantarum).